An 865-amino-acid chain; its full sequence is DNA topoisomerase 3-beta (865 aa).

One can recognise a Toprim domain in the interval 6–151 (RVLMVAEKPS…KVYRARFSSV (146 aa)). Mg(2+)-binding residues include Glu12, Asp116, and Asp118. The Topo IA-type catalytic domain occupies 167–587 (NRDEALAVDA…HVIQQFRRKF (421 aa)). Residues 209–214 (SYGPCQ) form an interaction with DNA region. The active-site O-(5'-phospho-DNA)-tyrosine intermediate is the Tyr331. The segment covering 833-853 (RRGGRGRGRGRGRGRGGRRGS) has biased composition (basic residues). Positions 833-865 (RRGGRGRGRGRGRGRGGRRGSKSVDPKMSFRDF) are disordered. Basic and acidic residues predominate over residues 854–865 (KSVDPKMSFRDF).

This sequence belongs to the type IA topoisomerase family. The cofactor is Mg(2+).

It catalyses the reaction ATP-independent breakage of single-stranded DNA, followed by passage and rejoining.. Functionally, releases the supercoiling and torsional tension of DNA introduced during the DNA replication and transcription by transiently cleaving and rejoining one strand of the DNA duplex. Introduces a single-strand break via transesterification at a target site in duplex DNA. The scissile phosphodiester is attacked by the catalytic tyrosine of the enzyme, resulting in the formation of a DNA-(5'-phosphotyrosyl)-enzyme intermediate and the expulsion of a 3'-OH DNA strand. The free DNA strand than undergoes passage around the unbroken strand thus removing DNA supercoils. Finally, in the religation step, the DNA 3'-OH attacks the covalent intermediate to expel the active-site tyrosine and restore the DNA phosphodiester backbone. This is DNA topoisomerase 3-beta from Arabidopsis thaliana (Mouse-ear cress).